The sequence spans 385 residues: Putative glutamate--cysteine ligase 2 (385 aa).

This sequence belongs to the glutamate--cysteine ligase type 2 family. YbdK subfamily.

It catalyses the reaction L-cysteine + L-glutamate + ATP = gamma-L-glutamyl-L-cysteine + ADP + phosphate + H(+). In terms of biological role, ATP-dependent carboxylate-amine ligase which exhibits weak glutamate--cysteine ligase activity. This chain is Putative glutamate--cysteine ligase 2, found in Solibacter usitatus (strain Ellin6076).